The following is a 32-amino-acid chain: Dermaseptin-DA4 (32 aa).

Expressed by the skin glands.

The protein resides in the secreted. Its subcellular location is the target cell membrane. Its function is as follows. Antimicrobial peptide with activity against Gram-negative bacteria, but not against Gram-positive bacteria. Active against E.coli (MIC=5 uM), and P.aeruginosa (MIC=40 uM). Acts by disrupting cell membranes. Is able to depolarize membranes of Gram-positive and Gram-negative bacteria. Also acts as a potent chemoattractant for human leukocytes and activates them mainly through a GPCR, possibly FPRL1 coupled to the ERK1/2 MAPK pathway. Is unstructured in water but become helical upon binding to anionic lipids. In contrast to most dermaseptins, is not structured in the presence of zwitterionic lipids. Does not show hemolytic activity. This is Dermaseptin-DA4 from Agalychnis dacnicolor (Giant Mexican leaf frog).